The chain runs to 360 residues: Phosphoserine aminotransferase (360 aa).

R41 serves as a coordination point for L-glutamate. Residues W101, T152, D172, and Q195 each contribute to the pyridoxal 5'-phosphate site. N6-(pyridoxal phosphate)lysine is present on K196. 237-238 contacts pyridoxal 5'-phosphate; it reads NT.

It belongs to the class-V pyridoxal-phosphate-dependent aminotransferase family. SerC subfamily. Homodimer. The cofactor is pyridoxal 5'-phosphate.

The protein localises to the cytoplasm. It catalyses the reaction O-phospho-L-serine + 2-oxoglutarate = 3-phosphooxypyruvate + L-glutamate. The enzyme catalyses 4-(phosphooxy)-L-threonine + 2-oxoglutarate = (R)-3-hydroxy-2-oxo-4-phosphooxybutanoate + L-glutamate. It functions in the pathway amino-acid biosynthesis; L-serine biosynthesis; L-serine from 3-phospho-D-glycerate: step 2/3. The protein operates within cofactor biosynthesis; pyridoxine 5'-phosphate biosynthesis; pyridoxine 5'-phosphate from D-erythrose 4-phosphate: step 3/5. In terms of biological role, catalyzes the reversible conversion of 3-phosphohydroxypyruvate to phosphoserine and of 3-hydroxy-2-oxo-4-phosphonooxybutanoate to phosphohydroxythreonine. This Burkholderia ambifaria (strain MC40-6) protein is Phosphoserine aminotransferase.